A 233-amino-acid polypeptide reads, in one-letter code: Leucyl/phenylalanyl-tRNA--protein transferase (233 aa).

It belongs to the L/F-transferase family.

The protein localises to the cytoplasm. It carries out the reaction N-terminal L-lysyl-[protein] + L-leucyl-tRNA(Leu) = N-terminal L-leucyl-L-lysyl-[protein] + tRNA(Leu) + H(+). The enzyme catalyses N-terminal L-arginyl-[protein] + L-leucyl-tRNA(Leu) = N-terminal L-leucyl-L-arginyl-[protein] + tRNA(Leu) + H(+). The catalysed reaction is L-phenylalanyl-tRNA(Phe) + an N-terminal L-alpha-aminoacyl-[protein] = an N-terminal L-phenylalanyl-L-alpha-aminoacyl-[protein] + tRNA(Phe). Functionally, functions in the N-end rule pathway of protein degradation where it conjugates Leu, Phe and, less efficiently, Met from aminoacyl-tRNAs to the N-termini of proteins containing an N-terminal arginine or lysine. The protein is Leucyl/phenylalanyl-tRNA--protein transferase of Laribacter hongkongensis (strain HLHK9).